Consider the following 461-residue polypeptide: Aldehyde dehydrogenase LUC3 (461 aa).

215–220 serves as a coordination point for NAD(+); it reads GSTATG. Catalysis depends on residues Glu-237 and Cys-271.

The protein belongs to the aldehyde dehydrogenase family.

The enzyme catalyses an aldehyde + NAD(+) + H2O = a carboxylate + NADH + 2 H(+). It participates in mycotoxin biosynthesis. Aldehyde dehydrogenase; part of the gene cluster that mediates the biosynthesis of the mycotoxin lucilactaene and the lucilactaene-related compound NG-391 that act as cell cycle inhibitors with potent growth inhibitory activity against malarial parasites, moderate growth inhibitory activity against cancer cells, and no activity against bacteria and fungi. LUC3 is important for lucilactaene biosynthesis and performs the oxidation of the C-20 alcoholic analog prelucilactaene G into a carboxylic derivative that has still to be identified. The pathway begins with the hybrid PKS-NRPS synthetase LUC5 which is responsible for the condensation of one acetyl-coenzyme A (CoA) unit with six malonyl-CoA units and the amide linkage of the arising heptaketide and homoserine, subsequently releasing the first intermediate prelucilactaene B. Both the cytochrome P450 monooxygenase LUC2 and the hydrolase LUC6 function in parallel in modification of prelucilactaene B. LUC6 may catalyze the 2-pyrrolidone ring formation to form prelucilactaene C from prelucilactaene B, followed by C-15 hydroxylation by the same enzyme to give prelucilactaene D, which is then converted to prelucilactaene E by epoxidation, and finally to prelucilactaene F by cyclization. Prelucilactane D, prelucilactaene E, and prelucilactaene F can be converted to dihydrolucilactaene, NG391, and lucilactaene, respectively, via C-20 methyl group hydroxylation by the cytochrome P450 monooxygenase LUC2. However, LUC2, unlike FUS8 in fusarin C biosynthesis, is not enough for the full oxidation of the C-20 methyl group into carboxylic acid, which is a prerequisite for the final methylation step. The aldehyde dehydrogenase LUC3 is involved in the biosynthesis by further oxidation of the C-20 alcoholic analog prelucilactaene G into a carboxylic derivative. This unidentified carboxylic derivative may be converted to demethyllucilactaene. As the last step, the methyltransferase LUC1 methylates the hydroxyl group at C-21 of demethyllucilactaene to generate lucilactaene. The protein is Aldehyde dehydrogenase LUC3 of Fusarium sp.